The following is a 144-amino-acid chain: Protein BUD31 homolog (144 aa).

The short motif at 2 to 10 (PKVRRSRKP) is the Nuclear localization signal element.

The protein belongs to the BUD31 (G10) family.

Its subcellular location is the nucleus. The chain is Protein BUD31 homolog from Branchiostoma belcheri (Amphioxus).